A 511-amino-acid polypeptide reads, in one-letter code: Potassium voltage-gated channel subfamily A member 10 (511 aa).

The tract at residues 25–44 is disordered; the sequence is EPGYATDFDPTSSKGRPGSS. A helical transmembrane segment spans residues 218–238; that stretch reads VAVVSVLVVVISITIFCLETL. The chain crosses the membrane as a helical span at residues 271–292; the sequence is FFMVESTCIVWFTFELVLRFVV. The S-palmitoyl cysteine moiety is linked to residue C293. The chain crosses the membrane as a helical span at residues 303–323; that stretch reads IMNIIDIISIIPYFATLITEL. The chain crosses the membrane as a helical; Voltage-sensor span at residues 339 to 358; sequence ILRIIRLVRVFRIFKLSRHS. Residues 375–395 traverse the membrane as a helical segment; that stretch reads LGLLIFFLFIGVILFSSAVYF. Residues 421-426 carry the Selectivity filter motif; that stretch reads TVGYGD. A helical membrane pass occupies residues 436–456; the sequence is IVGTLCAIAGVLTIALPVPVI. Positions 489-511 are disordered; the sequence is SRMGSTESLNKTNGSCSAEKSRK.

It belongs to the potassium channel family. A (Shaker) (TC 1.A.1.2) subfamily. Kv1.8/KCNA10 sub-subfamily. Homotetramer. Interacts with KCN4B/POMP. Interaction with KCN4B/POMP is necessary for the modulation of channel activity by cAMP. In terms of tissue distribution, expressed strongly in the inner ear and weakly in skeletal muscle. Not detected in other tissues.

It is found in the membrane. It catalyses the reaction K(+)(in) = K(+)(out). With respect to regulation, the channel activity is up-regulated by cAMP. Voltage-gated potassium ion channel that mediates K(+) permeability of excitable membranes. When opened in response to the voltage difference across the membrane, KCNA10 channel selectively allows the flow of potassium ions across the membrane down their electrochemical gradient. This Mus musculus (Mouse) protein is Potassium voltage-gated channel subfamily A member 10.